We begin with the raw amino-acid sequence, 110 residues long: PHD finger-like domain-containing protein 5B (110 aa).

It belongs to the PHF5 family.

This chain is PHD finger-like domain-containing protein 5B, found in Arabidopsis thaliana (Mouse-ear cress).